The primary structure comprises 460 residues: Carboxypeptidase DacB (460 aa).

Positions 1 to 28 (MRPTRWRRSTHVAVGVAVLALVVAVVAA) are cleaved as a signal peptide. The disordered stretch occupies residues 39-64 (AAEAVPPAPPPATADPGVVPVDLSAP). Serine 113 (acyl-ester intermediate) is an active-site residue. Lysine 116 acts as the Proton acceptor in catalysis. Serine 294 is an active-site residue.

The protein belongs to the peptidase S13 family.

Its function is as follows. Carboxypeptidase that cleaves terminal D-alanine from peptidoglycan in the mycobacterial cell wall. May cleave L-Lys-D-Ala and/or D-Ala-D-Ala peptide bonds. Exerts important effects on mycobacterial cell morphology and cell division. The sequence is that of Carboxypeptidase DacB from Mycolicibacterium smegmatis (strain ATCC 700084 / mc(2)155) (Mycobacterium smegmatis).